We begin with the raw amino-acid sequence, 274 residues long: NH(3)-dependent NAD(+) synthetase (274 aa).

Residue 46–53 participates in ATP binding; it reads GISGGQDS. Mg(2+) is bound at residue aspartate 52. Residue arginine 140 coordinates deamido-NAD(+). Threonine 160 serves as a coordination point for ATP. Glutamate 165 serves as a coordination point for Mg(2+). Positions 173 and 180 each coordinate deamido-NAD(+). ATP-binding residues include lysine 189 and threonine 211. 260 to 261 contributes to the deamido-NAD(+) binding site; it reads HK.

This sequence belongs to the NAD synthetase family. In terms of assembly, homodimer.

The enzyme catalyses deamido-NAD(+) + NH4(+) + ATP = AMP + diphosphate + NAD(+) + H(+). Its pathway is cofactor biosynthesis; NAD(+) biosynthesis; NAD(+) from deamido-NAD(+) (ammonia route): step 1/1. In terms of biological role, catalyzes the ATP-dependent amidation of deamido-NAD to form NAD. Uses ammonia as a nitrogen source. The polypeptide is NH(3)-dependent NAD(+) synthetase (Streptococcus sanguinis (strain SK36)).